The primary structure comprises 324 residues: Virulence-associated V antigen (324 aa).

The protein localises to the secreted. Its function is as follows. Possibly involved in calcium regulation of YOP expression, which includes the export process. The chain is Virulence-associated V antigen (lcrV) from Yersinia pestis (strain Pestoides F).